Here is a 514-residue protein sequence, read N- to C-terminus: H/ACA ribonucleoprotein complex subunit DKC1 (514 aa).

At Ala2 the chain carries N-acetylalanine. The nucleolar localization stretch occupies residues Ala2–Ser21. Lys20 is covalently cross-linked (Glycyl lysine isopeptide (Lys-Gly) (interchain with G-Cter in SUMO2)). A Phosphoserine modification is found at Ser21. Glycyl lysine isopeptide (Lys-Gly) (interchain with G-Cter in SUMO2) cross-links involve residues Lys39 and Lys43. The active-site Nucleophile is the Asp125. Lys191 is covalently cross-linked (Glycyl lysine isopeptide (Lys-Gly) (interchain with G-Cter in SUMO2)). In terms of domain architecture, PUA spans His296–Met371. Residue Ser387 is modified to Phosphoserine. Residue Lys394 forms a Glycyl lysine isopeptide (Lys-Gly) (interchain with G-Cter in SUMO2) linkage. Residue Lys413 forms a Glycyl lysine isopeptide (Lys-Gly) (interchain with G-Cter in SUMO1); alternate linkage. Lys413 is covalently cross-linked (Glycyl lysine isopeptide (Lys-Gly) (interchain with G-Cter in SUMO2); alternate). Residues Lys424 and Lys433 each participate in a glycyl lysine isopeptide (Lys-Gly) (interchain with G-Cter in SUMO2) cross-link. Residues Lys443–Glu514 form a disordered region. The segment at Lys446–Glu514 is nuclear and nucleolar localization. Residues Ser451, Ser453, and Ser455 each carry the phosphoserine modification. Thr458 carries the post-translational modification Phosphothreonine. Lys467 is covalently cross-linked (Glycyl lysine isopeptide (Lys-Gly) (interchain with G-Cter in SUMO2)). Over residues Lys468 to Lys480 the composition is skewed to basic residues. Residues Ser485, Ser494, and Ser513 each carry the phosphoserine modification.

The protein belongs to the pseudouridine synthase TruB family. As to quaternary structure, part of the H/ACA small nucleolar ribonucleoprotein (H/ACA snoRNP) complex, which contains NHP2/NOLA2, GAR1/NOLA1, NOP10/NOLA3, and DKC1/NOLA4, which is presumed to be the catalytic subunit. The complex contains a stable core formed by binding of one or two NOP10-DKC1 heterodimers to NHP2; GAR1 subsequently binds to this core via DKC1. The complex binds a box H/ACA small nucleolar RNA (snoRNA), which may target the specific site of modification within the RNA substrate. During assembly, the complex contains NAF1 instead of GAR1/NOLA1. The complex also interacts with TERC, which contains a 3'-terminal domain related to the box H/ACA snoRNAs. Specific interactions with snoRNAs or TERC are mediated by GAR1 and NHP2. Associates with NOLC1/NOPP140. H/ACA snoRNPs interact with the SMN complex, consisting of SMN1 or SMN2, GEMIN2/SIP1, DDX20/GEMIN3, and GEMIN4. This is mediated by interaction between GAR1 and SMN1 or SMN2. The SMN complex may be required for correct assembly of the H/ACA snoRNP complex. Component of the telomerase holoenzyme complex composed of one molecule of TERT, one molecule of WRAP53/TCAB1, two molecules of H/ACA ribonucleoprotein complex subunits DKC1, NOP10, NHP2 and GAR1, and a telomerase RNA template component (TERC). The telomerase holoenzyme complex is associated with TEP1, SMG6/EST1A and POT1. Interacts with SHQ1; this interaction may lead to the stabilization of DKC1, from the time of its synthesis until its association with NOP10, NHP2, and NAF1 at the nascent H/ACA RNA. Interacts with HMBOX1. Interacts with DHX36. In terms of tissue distribution, ubiquitously expressed.

The protein resides in the nucleus. The protein localises to the nucleolus. Its subcellular location is the cajal body. It localises to the cytoplasm. It carries out the reaction uridine in 5S rRNA = pseudouridine in 5S rRNA. Functionally, catalytic subunit of H/ACA small nucleolar ribonucleoprotein (H/ACA snoRNP) complex, which catalyzes pseudouridylation of rRNA. This involves the isomerization of uridine such that the ribose is subsequently attached to C5, instead of the normal N1. Each rRNA can contain up to 100 pseudouridine ('psi') residues, which may serve to stabilize the conformation of rRNAs. Required for ribosome biogenesis and telomere maintenance. Also required for correct processing or intranuclear trafficking of TERC, the RNA component of the telomerase reverse transcriptase (TERT) holoenzyme. Promotes cell to cell and cell to substratum adhesion, increases the cell proliferation rate and leads to cytokeratin hyper-expression. In Homo sapiens (Human), this protein is H/ACA ribonucleoprotein complex subunit DKC1.